The sequence spans 493 residues: Cytochrome P450 2E1 (493 aa).

298–303 (FAGTET) is a substrate binding site. Cysteine 437 provides a ligand contact to heme.

Belongs to the cytochrome P450 family. Interacts with chaperones HSP70 and HSP90; this interaction is required for initial targeting to mitochondria. It depends on heme as a cofactor. Highest level in the liver and to a lesser extent in the kidney, with a higher level in the male kidney than in the female.

It localises to the endoplasmic reticulum membrane. Its subcellular location is the microsome membrane. The protein resides in the mitochondrion inner membrane. It carries out the reaction an organic molecule + reduced [NADPH--hemoprotein reductase] + O2 = an alcohol + oxidized [NADPH--hemoprotein reductase] + H2O + H(+). The enzyme catalyses (5Z,8Z,11Z)-eicosatrienoate + reduced [NADPH--hemoprotein reductase] + O2 = 19-hydroxy-(5Z,8Z,11Z)-eicosatrienoate + oxidized [NADPH--hemoprotein reductase] + H2O + H(+). It catalyses the reaction (5Z,8Z,11Z,14Z,17Z)-eicosapentaenoate + reduced [NADPH--hemoprotein reductase] + O2 = 19-hydroxy-(5Z,8Z,11Z,14Z,17Z)-eicosapentaenoate + oxidized [NADPH--hemoprotein reductase] + H2O + H(+). The catalysed reaction is (4Z,7Z,10Z,13Z,16Z,19Z)-docosahexaenoate + reduced [NADPH--hemoprotein reductase] + O2 = 21-hydroxy-(4Z,7Z,10Z,13Z,16Z,19Z)-docosahexaenoate + oxidized [NADPH--hemoprotein reductase] + H2O + H(+). It carries out the reaction dodecanoate + reduced [NADPH--hemoprotein reductase] + O2 = 11-hydroxydodecanoate + oxidized [NADPH--hemoprotein reductase] + H2O + H(+). The enzyme catalyses tetradecanoate + reduced [NADPH--hemoprotein reductase] + O2 = 13-hydroxytetradecanoate + oxidized [NADPH--hemoprotein reductase] + H2O + H(+). It catalyses the reaction 4-nitrophenol + NADPH + O2 + H(+) = 4-nitrocatechol + NADP(+) + H2O. Its pathway is lipid metabolism; fatty acid metabolism. The omega-1 hydroxylase activity is stimulated by cytochrome b5. A cytochrome P450 monooxygenase involved in the metabolism of fatty acids. Mechanistically, uses molecular oxygen inserting one oxygen atom into a substrate, and reducing the second into a water molecule, with two electrons provided by NADPH via cytochrome P450 reductase (NADPH--hemoprotein reductase). Catalyzes the hydroxylation of carbon-hydrogen bonds. Hydroxylates fatty acids specifically at the omega-1 position displaying the highest catalytic activity for saturated fatty acids. May be involved in the oxidative metabolism of xenobiotics. This chain is Cytochrome P450 2E1 (Cyp2e1), found in Mus musculus (Mouse).